We begin with the raw amino-acid sequence, 92 residues long: Small ribosomal subunit protein uS19 (92 aa).

This sequence belongs to the universal ribosomal protein uS19 family.

In terms of biological role, protein S19 forms a complex with S13 that binds strongly to the 16S ribosomal RNA. In Gloeobacter violaceus (strain ATCC 29082 / PCC 7421), this protein is Small ribosomal subunit protein uS19.